Here is a 256-residue protein sequence, read N- to C-terminus: DNA repair protein RecO (256 aa).

Belongs to the RecO family.

In terms of biological role, involved in DNA repair and RecF pathway recombination. The sequence is that of DNA repair protein RecO from Clostridium novyi (strain NT).